Reading from the N-terminus, the 150-residue chain is Thyroid hormone-inducible hepatic protein (150 aa).

The segment at 83 to 104 (KVAGNETSEAENDAAETEEAEE) is disordered. A Phosphoserine modification is found at serine 90. The span at 90 to 104 (SEAENDAAETEEAEE) shows a compositional bias: acidic residues.

Belongs to the SPOT14 family. Homodimer. Heterodimer with MID1IP1. Interacts with THRB and PLAGL1. As to expression, mainly expressed in tissues that synthesize triglycerides.

The protein localises to the nucleus. It localises to the cytoplasm. Plays a role in the regulation of lipogenesis, especially in lactating mammary gland. Important for the biosynthesis of triglycerides with medium-length fatty acid chains. May modulate lipogenesis by interacting with MID1IP1 and preventing its interaction with ACACA. May function as transcriptional coactivator. May modulate the transcription factor activity of THRB. This is Thyroid hormone-inducible hepatic protein (Thrsp) from Mus musculus (Mouse).